A 79-amino-acid chain; its full sequence is ATP synthase subunit c (79 aa).

The next 2 membrane-spanning stretches (helical) occupy residues 10 to 30 (IAGA…IGVL) and 52 to 72 (FFIV…LAMY).

Belongs to the ATPase C chain family. F-type ATPases have 2 components, F(1) - the catalytic core - and F(0) - the membrane proton channel. F(1) has five subunits: alpha(3), beta(3), gamma(1), delta(1), epsilon(1). F(0) has three main subunits: a(1), b(2) and c(10-14). The alpha and beta chains form an alternating ring which encloses part of the gamma chain. F(1) is attached to F(0) by a central stalk formed by the gamma and epsilon chains, while a peripheral stalk is formed by the delta and b chains.

Its subcellular location is the cell inner membrane. F(1)F(0) ATP synthase produces ATP from ADP in the presence of a proton or sodium gradient. F-type ATPases consist of two structural domains, F(1) containing the extramembraneous catalytic core and F(0) containing the membrane proton channel, linked together by a central stalk and a peripheral stalk. During catalysis, ATP synthesis in the catalytic domain of F(1) is coupled via a rotary mechanism of the central stalk subunits to proton translocation. Its function is as follows. Key component of the F(0) channel; it plays a direct role in translocation across the membrane. A homomeric c-ring of between 10-14 subunits forms the central stalk rotor element with the F(1) delta and epsilon subunits. The sequence is that of ATP synthase subunit c from Thiobacillus denitrificans (strain ATCC 25259 / T1).